A 516-amino-acid polypeptide reads, in one-letter code: Acetylcholine receptor subunit delta (516 aa).

An N-terminal signal peptide occupies residues 1–21; that stretch reads MEGSVLTLVLLAALVVCGSWG. Topologically, residues 22 to 244 are extracellular; that stretch reads LNEEERLIRH…VTFYLIIRRK (223 aa). 2 N-linked (GlcNAc...) asparagine glycosylation sites follow: N96 and N163. C150 and C164 form a disulfide bridge. Transmembrane regions (helical) follow at residues 245 to 269, 279 to 296, and 311 to 332; these read PLFYVINILVPCVLISFMINLVFYL, MAISVLLAQSVFLLLISK, and FLLFGMVLVTMVVVICVIVLNI. Residues 333-470 are Cytoplasmic-facing; the sequence is HFRTPSTHVL…WNRVARTVDR (138 aa). At Y389 the chain carries Phosphotyrosine; by Tyr-kinases. A helical membrane pass occupies residues 471-493; that stretch reads LCLFVVTPIMVVGTAWIFLQGAY.

The protein belongs to the ligand-gated ion channel (TC 1.A.9) family. Acetylcholine receptor (TC 1.A.9.1) subfamily. Delta/CHRND sub-subfamily. As to quaternary structure, pentamer of two alpha chains, and one each of the beta, delta, and gamma (in immature muscle) or epsilon (in mature muscle) chains. The muscle heteropentamer composed of alpha-1, beta-1, delta, epsilon subunits interacts with the alpha-conotoxin ImII.

The protein resides in the postsynaptic cell membrane. It localises to the cell membrane. The enzyme catalyses K(+)(in) = K(+)(out). It catalyses the reaction Na(+)(in) = Na(+)(out). Functionally, after binding acetylcholine, the AChR responds by an extensive change in conformation that affects all subunits and leads to opening of an ion-conducting channel across the plasma membrane. The polypeptide is Acetylcholine receptor subunit delta (CHRND) (Bos taurus (Bovine)).